The following is a 403-amino-acid chain: Argininosuccinate synthase (403 aa).

10–18 (AYSGGLDTS) is an ATP binding site. Tyr-87 is a binding site for L-citrulline. Residue Gly-117 participates in ATP binding. 3 residues coordinate L-aspartate: Thr-119, Asn-123, and Asp-124. Asn-123 serves as a coordination point for L-citrulline. 4 residues coordinate L-citrulline: Arg-127, Ser-175, Glu-260, and Tyr-272.

This sequence belongs to the argininosuccinate synthase family. Type 1 subfamily. As to quaternary structure, homotetramer.

It is found in the cytoplasm. It catalyses the reaction L-citrulline + L-aspartate + ATP = 2-(N(omega)-L-arginino)succinate + AMP + diphosphate + H(+). Its pathway is amino-acid biosynthesis; L-arginine biosynthesis; L-arginine from L-ornithine and carbamoyl phosphate: step 2/3. This is Argininosuccinate synthase from Bacillus velezensis (strain DSM 23117 / BGSC 10A6 / LMG 26770 / FZB42) (Bacillus amyloliquefaciens subsp. plantarum).